The primary structure comprises 873 residues: MEIASKYNPAEVEGKWYQYWLDNGFFKSKPDGREPYTIVIPPPNVTGVLHMGHMLNNTIQDILVRRARMMGKNACWVPGTDHASIATEAKVVNRLAGQGIKKTDLTRDEFLRHAWEWKEEHGGIILKQLRKLGASCDWDRTAFTMDEKRSESVIKVFVDLYKKGLIYRGVRMVNWDPKALTALSDEEVIYKEEHSKLYYLRYKIVGEEGYAVVATTRPETIMGDTAMCINPNDPKNQHLRGKKVIVPLVGREIPVIEDDYVDIEFGTGCLKVTPAHDVNDYMLGEKYNLPSIDIFNDNGTLSEAAGLYVGMDRFDVRKQIEEDLRNAGLLEKVEAYENKVGFSERTNVPIEPKLSMQWFLKMEHLAQIALEPVMKDDIKFYPPKFKNTYRHWMENIKDWCISRQLWWGHRIPAYFLPEGGYVVAETEEKALELAKEKCGNPNLTMSDLRQDEDVLDTWFSSWLWPISLFDGINNPDNEEINYYYPTSDLVTGPDIIFFWVARMIMAGYEYRGKMPFKSVYFTGIVRDKLGRKMSKSLGNSPDPLQLIEQYGADGVRMGLMLAAPAGNDIPFDDALCEQGRNFNNKIWNAFRLVKGWTVDDTIAQPEASAIAVKWFKMQLDKTIAEVDDSFSKYRLSEAMMAVYKLFWDEFSSWYLEMVKPGYQQPIDKATYEATLGFFDALLRLLHPFMPFITEELWQALEPRKEGESLMVAQMPEIAVIDSAYLDAFEIVKEIVGGVRTIRLQKNIPNKDALELQIVGEHNEAFNAVIAKMCNLSSISKVEEKAAGAVSFLVRTTEYAVPLGNLINVEEELAKLQEELKYQKGFLASVMKKLGNENFVSKAPAKVIEMEKKKQADAESKIKSIEESIAALTK.

Positions 43-53 (PNVTGVLHMGH) match the 'HIGH' region motif. Residues 532-536 (KMSKS) carry the 'KMSKS' region motif. Lys-535 lines the ATP pocket. The stretch at 802-873 (LGNLINVEEE…IEESIAALTK (72 aa)) forms a coiled coil.

It belongs to the class-I aminoacyl-tRNA synthetase family. ValS type 1 subfamily. Monomer.

The protein localises to the cytoplasm. The catalysed reaction is tRNA(Val) + L-valine + ATP = L-valyl-tRNA(Val) + AMP + diphosphate. In terms of biological role, catalyzes the attachment of valine to tRNA(Val). As ValRS can inadvertently accommodate and process structurally similar amino acids such as threonine, to avoid such errors, it has a 'posttransfer' editing activity that hydrolyzes mischarged Thr-tRNA(Val) in a tRNA-dependent manner. The sequence is that of Valine--tRNA ligase from Parabacteroides distasonis (strain ATCC 8503 / DSM 20701 / CIP 104284 / JCM 5825 / NCTC 11152).